We begin with the raw amino-acid sequence, 166 residues long: Protein C (166 aa).

Residues 17-42 form a disordered region; it reads YKRHTDDQASNNQVPKTGQEHGRTSC.

May counteract the cellular interferon antiviral system. This chain is Protein C (P/V/C), found in Hendra virus (isolate Horse/Autralia/Hendra/1994).